The following is a 517-amino-acid chain: Nicotine N-demethylase CYP82E4 (517 aa).

The helical transmembrane segment at 2-22 threads the bilayer; it reads LSPIEAIVGLVTFTFLFYFLW. Lys-254 is covalently cross-linked (Glycyl lysine isopeptide (Lys-Gly) (interchain with G-Cter in ubiquitin)). Cys-457 lines the heme pocket.

Belongs to the cytochrome P450 family. CYP82E2 subfamily. Heme serves as cofactor. Expressed in leaves.

The protein localises to the membrane. It carries out the reaction (S)-nicotine + reduced [NADPH--hemoprotein reductase] + O2 = (S)-nornicotine + formaldehyde + oxidized [NADPH--hemoprotein reductase] + H2O + H(+). It functions in the pathway alkaloid biosynthesis; nicotine biosynthesis. In terms of biological role, involved in the biosynthesis of pyridine alkaloid natural products, leading mainly to the production of anabasine, anatabine, nicotine and nornicotine, effective deterrents against herbivores with antiparasitic and pesticide properties (neurotoxins); nornicotine serves as the precursor in the synthesis of the carcinogen compound N'-nitrosonornicotine (NNN). Catalyzes the demethylation of nicotine to form nornicotine. This chain is Nicotine N-demethylase CYP82E4, found in Nicotiana tomentosiformis (Tobacco).